The primary structure comprises 440 residues: Glycerophosphocholine cholinephosphodiesterase ENPP6 (440 aa).

An N-terminal signal peptide occupies residues 1–22; it reads MAVKLGTLLLALALGLAQPASA. 3 residues coordinate substrate: Asp-32, Ser-71, and Asn-92. Residues Asp-32 and Ser-71 each contribute to the Zn(2+) site. Ser-71 functions as the Nucleophile in the catalytic mechanism. At Ser-71 the chain carries Phosphoserine. Residues Asn-100 and Asn-118 are each glycosylated (N-linked (GlcNAc...) asparagine). The cysteines at positions 142 and 154 are disulfide-linked. Asp-193 is a binding site for substrate. 4 residues coordinate Zn(2+): Asp-193, His-197, Asp-240, and His-241. Residue His-241 participates in substrate binding. Residue Asn-341 is glycosylated (N-linked (GlcNAc...) asparagine). His-354 contacts substrate. Residue His-354 coordinates Zn(2+). Asn-404 is a glycosylation site (N-linked (GlcNAc...) asparagine). Ser-419 carries the GPI-anchor amidated serine lipid modification. Residues 420-440 constitute a propeptide, removed in mature form; the sequence is TAPPVWPSHCALALILLFLLA.

It belongs to the nucleotide pyrophosphatase/phosphodiesterase family. As to quaternary structure, homodimer; disulfide-linked. Homotetramer. The cofactor is Zn(2+). In terms of tissue distribution, predominantly expressed in kidney and brain. In the kidney, expressed specifically in the proximal tubules and thin descending limbs of Henle (at protein level).

The protein localises to the cell membrane. It catalyses the reaction sn-glycerol 3-phosphocholine + H2O = phosphocholine + glycerol + H(+). It carries out the reaction a 1-acyl-sn-glycero-3-phosphocholine + H2O = a 1-acyl-sn-glycerol + phosphocholine + H(+). The catalysed reaction is a 1-O-alkyl-sn-glycero-3-phosphocholine + H2O = a 1-O-alkyl-sn-glycerol + phosphocholine + H(+). The enzyme catalyses 1-dodecanoyl-sn-glycero-3-phosphocholine + H2O = 1-dodecanoyl-sn-glycerol + phosphocholine + H(+). It catalyses the reaction 1-hexadecanoyl-sn-glycero-3-phosphocholine + H2O = 1-hexadecanoyl-sn-glycerol + phosphocholine + H(+). It carries out the reaction 1-(5Z,8Z,11Z,14Z-eicosatetraenoyl)-sn-glycero-3-phosphocholine + H2O = 1-(5Z,8Z,11Z,14Z-eicosatetraenoyl)-sn-glycerol + phosphocholine + H(+). The catalysed reaction is 1-tetradecanoyl-sn-glycero-3-phosphocholine + H2O = 1-tetradecanoyl-sn-glycerol + phosphocholine + H(+). The enzyme catalyses sphing-4-enine-phosphocholine + H2O = sphing-4-enine + phosphocholine + H(+). It catalyses the reaction 1-(9Z-octadecenoyl)-sn-glycero-3-phosphocholine + H2O = 1-(9Z-octadecenoyl)-sn-glycerol + phosphocholine + H(+). It carries out the reaction 1-(9Z,12Z)-octadecadienoyl-sn-glycero-3-phosphocholine + H2O = 1-(9Z,12Z-octadecadienoyl)-sn-glycerol + phosphocholine + H(+). The catalysed reaction is glycero-2-phosphocholine + H2O = phosphocholine + glycerol + H(+). Its activity is regulated as follows. Inhibited by EDTA and EGTA in vitro. Its function is as follows. Choline-specific glycerophosphodiesterase that hydrolyzes glycerophosphocholine (GPC) and lysophosphatidylcholine (LPC) and contributes to supplying choline to the cells. Has a preference for LPC with short (12:0 and 14:0) or polyunsaturated (18:2 and 20:4) fatty acids. In vitro, hydrolyzes only choline-containing lysophospholipids, such as sphingosylphosphorylcholine (SPC), platelet-activating factor (PAF) and lysoPAF, but not other lysophospholipids. The sequence is that of Glycerophosphocholine cholinephosphodiesterase ENPP6 from Homo sapiens (Human).